The chain runs to 225 residues: UPF0758 protein Sez_1052 (225 aa).

Residues 102-224 (PVLSSAQVAE…YYSFREKSDL (123 aa)) enclose the MPN domain. Residues histidine 173, histidine 175, and aspartate 186 each coordinate Zn(2+). The short motif at 173–186 (HNHPSGLTKPSAND) is the JAMM motif element.

The protein belongs to the UPF0758 family.

In Streptococcus equi subsp. zooepidemicus (strain MGCS10565), this protein is UPF0758 protein Sez_1052.